Here is a 287-residue protein sequence, read N- to C-terminus: ATP synthase gamma chain (287 aa).

The protein belongs to the ATPase gamma chain family. As to quaternary structure, F-type ATPases have 2 components, CF(1) - the catalytic core - and CF(0) - the membrane proton channel. CF(1) has five subunits: alpha(3), beta(3), gamma(1), delta(1), epsilon(1). CF(0) has three main subunits: a, b and c.

It localises to the cell membrane. Produces ATP from ADP in the presence of a proton gradient across the membrane. The gamma chain is believed to be important in regulating ATPase activity and the flow of protons through the CF(0) complex. The protein is ATP synthase gamma chain of Bacillus caldotenax.